A 204-amino-acid polypeptide reads, in one-letter code: Large ribosomal subunit protein uL4 (204 aa).

The tract at residues Thr49–Ser75 is disordered.

It belongs to the universal ribosomal protein uL4 family. Part of the 50S ribosomal subunit.

Functionally, one of the primary rRNA binding proteins, this protein initially binds near the 5'-end of the 23S rRNA. It is important during the early stages of 50S assembly. It makes multiple contacts with different domains of the 23S rRNA in the assembled 50S subunit and ribosome. Forms part of the polypeptide exit tunnel. The polypeptide is Large ribosomal subunit protein uL4 (Campylobacter jejuni (strain RM1221)).